A 350-amino-acid chain; its full sequence is GTPase Obg (350 aa).

Residues 1–175 enclose the Obg domain; that stretch reads MFVDNIRIFA…GVFFMELRRI (175 aa). The OBG-type G domain maps to 176 to 345; sequence ADAGLVGYPN…LRNRLDELVG (170 aa). GTP is bound by residues 182–189, 207–211, 229–232, 299–302, and 326–328; these read GYPNAGKS, FTTLQ, DIPG, NKMD, and SAL. Mg(2+) is bound by residues S189 and T209.

It belongs to the TRAFAC class OBG-HflX-like GTPase superfamily. OBG GTPase family. As to quaternary structure, monomer. Mg(2+) is required as a cofactor.

It is found in the cytoplasm. Its function is as follows. An essential GTPase which binds GTP, GDP and possibly (p)ppGpp with moderate affinity, with high nucleotide exchange rates and a fairly low GTP hydrolysis rate. Plays a role in control of the cell cycle, stress response, ribosome biogenesis and in those bacteria that undergo differentiation, in morphogenesis control. The sequence is that of GTPase Obg from Akkermansia muciniphila (strain ATCC BAA-835 / DSM 22959 / JCM 33894 / BCRC 81048 / CCUG 64013 / CIP 107961 / Muc).